The chain runs to 314 residues: Curved DNA-binding protein (314 aa).

Residues 5-69 form the J domain; it reads DYYKILDVEP…EKRAEYDELR (65 aa). The tract at residues 73–92 is disordered; that stretch reads RQGRPFQTPPGWQSRAGAGA.

The protein resides in the cytoplasm. It localises to the nucleoid. Its function is as follows. DNA-binding protein that preferentially recognizes a curved DNA sequence. It is probably a functional analog of DnaJ; displays overlapping activities with DnaJ, but functions under different conditions, probably acting as a molecular chaperone in an adaptive response to environmental stresses other than heat shock. Lacks autonomous chaperone activity; binds native substrates and targets them for recognition by DnaK. Its activity is inhibited by the binding of CbpM. The polypeptide is Curved DNA-binding protein (Pseudomonas syringae pv. tomato (strain ATCC BAA-871 / DC3000)).